Consider the following 176-residue polypeptide: Tubulin polymerization-promoting protein family member 3 (176 aa).

Ala2 carries the post-translational modification N-acetylalanine.

It belongs to the TPPP family.

Its subcellular location is the cytoplasm. The protein resides in the cytoskeleton. Regulator of microtubule dynamic that has microtubule bundling activity. Required for embryo implantation; possibly by regulating beta-catenin. Also required for decidualization via regulation of beta-catenin. This is Tubulin polymerization-promoting protein family member 3 (TPPP3) from Bos taurus (Bovine).